The sequence spans 237 residues: NAD-dependent protein deacetylase (237 aa).

Residues 1-237 enclose the Deacetylase sirtuin-type domain; it reads MLTTWLTEAK…LEETNRALQA (237 aa). The NAD(+) site is built by Ala-18, Thr-22, Phe-29, Arg-30, Gln-95, Asp-98, and His-113. Phe-29 provides a ligand contact to nicotinamide. Asp-98 contacts nicotinamide. His-113 serves as the catalytic Proton acceptor. 4 residues coordinate Zn(2+): Cys-121, Cys-124, Cys-140, and Cys-142. NAD(+) is bound by residues Ser-180, Ser-181, Asn-205, and Ile-224.

This sequence belongs to the sirtuin family. Class U subfamily. It depends on Zn(2+) as a cofactor.

The protein localises to the cytoplasm. It catalyses the reaction N(6)-acetyl-L-lysyl-[protein] + NAD(+) + H2O = 2''-O-acetyl-ADP-D-ribose + nicotinamide + L-lysyl-[protein]. In terms of biological role, NAD-dependent protein deacetylase which modulates the activities of several enzymes which are inactive in their acetylated form. This is NAD-dependent protein deacetylase from Halalkalibacterium halodurans (strain ATCC BAA-125 / DSM 18197 / FERM 7344 / JCM 9153 / C-125) (Bacillus halodurans).